The following is a 500-amino-acid chain: NAD(P)H-quinone oxidoreductase chain 4, chloroplastic (500 aa).

A run of 14 helical transmembrane segments spans residues 4 to 24 (FPWLTIIVVFPIFAGSLIFFL), 35 to 55 (YTICICILELLLTTYAFCYHF), 87 to 107 (IGPILLTGFITTLATLAAWPV), 113 to 130 (LFHFLMLAMYSGQIGSFS), 134 to 154 (LLLFFIMWELELIPVYLLLCM), 167 to 187 (FILYTAGGSVFLLMGVLGLAL), 208 to 228 (VLEIIFYIGFFIAFAVKSPII), 242 to 262 (HYSTCMLLAGILLKMGAYGLI), 274 to 294 (SIFSPWLMIIGTIQIIYAALT), 305 to 325 (IAYSSVSHMGFIIIGISSLTD), 330 to 350 (GALLQIISHGFIGAALFFLAG), 386 to 406 (LALPGMSGFVAELIVFFGIIT), 411 to 431 (LLIPKILITFVMAIGMILTPI), and 462 to 482 (LFLSISIFLPVIGIGIYPDFV).

It belongs to the complex I subunit 4 family.

The protein localises to the plastid. The protein resides in the chloroplast thylakoid membrane. It carries out the reaction a plastoquinone + NADH + (n+1) H(+)(in) = a plastoquinol + NAD(+) + n H(+)(out). The enzyme catalyses a plastoquinone + NADPH + (n+1) H(+)(in) = a plastoquinol + NADP(+) + n H(+)(out). This Nicotiana tabacum (Common tobacco) protein is NAD(P)H-quinone oxidoreductase chain 4, chloroplastic (ndhD).